An 859-amino-acid chain; its full sequence is Ribose import ATP-binding protein RbsA 1 (859 aa).

The tract at residues 1-351 (MRASLENGDD…AARAPDEASE (351 aa)) is disordered. The segment at 1–353 (MRASLENGDD…RAPDEASEEA (353 aa)) is unknown. Basic and acidic residues predominate over residues 8-17 (GDDHDAHRLV). Positions 28 to 43 (RAARRRAFARARRGER) are enriched in basic residues. 3 stretches are compositionally biased toward basic and acidic residues: residues 44-80 (RARGTAEDRHDVPGAEQPVLRDDAKGARRGGRVDRRA), 89-129 (RREQ…EEGG), and 137-167 (RERERPGRRVRRLEEFRRGRDVVRLPREGDR). Positions 168 to 179 (RRRRSRDPRRHP) are enriched in basic residues. 5 stretches are compositionally biased toward basic and acidic residues: residues 193–214 (GAREIPEREDRRRAERQAGARE), 239–250 (RLDGRAVRDRGV), 263–281 (AGGDRGDAEAELEVHRDVR), 288–301 (DSPRDRHRAREEVG), and 308–323 (DSGRREADRQGQREDV). ABC transporter domains lie at 358-594 (LALT…VGRR) and 607-851 (RDAA…TSDV). ATP is bound at residue 390–397 (GENGAGKS).

It belongs to the ABC transporter superfamily. Ribose importer (TC 3.A.1.2.1) family. As to quaternary structure, the complex is composed of an ATP-binding protein (RbsA), two transmembrane proteins (RbsC) and a solute-binding protein (RbsB).

The protein localises to the cell inner membrane. It catalyses the reaction D-ribose(out) + ATP + H2O = D-ribose(in) + ADP + phosphate + H(+). Functionally, part of the ABC transporter complex RbsABC involved in ribose import. Responsible for energy coupling to the transport system. The protein is Ribose import ATP-binding protein RbsA 1 of Burkholderia pseudomallei (strain 1710b).